The chain runs to 359 residues: 3-dehydroquinate synthase (359 aa).

Residues 71–76 (DGEAYK), 105–109 (GVIGD), 129–130 (TT), lysine 142, lysine 151, and 169–172 (TLGT) contribute to the NAD(+) site. Residues glutamate 184, histidine 247, and histidine 264 each contribute to the Zn(2+) site.

This sequence belongs to the sugar phosphate cyclases superfamily. Dehydroquinate synthase family. Requires Co(2+) as cofactor. The cofactor is Zn(2+). It depends on NAD(+) as a cofactor.

Its subcellular location is the cytoplasm. It catalyses the reaction 7-phospho-2-dehydro-3-deoxy-D-arabino-heptonate = 3-dehydroquinate + phosphate. The protein operates within metabolic intermediate biosynthesis; chorismate biosynthesis; chorismate from D-erythrose 4-phosphate and phosphoenolpyruvate: step 2/7. Catalyzes the conversion of 3-deoxy-D-arabino-heptulosonate 7-phosphate (DAHP) to dehydroquinate (DHQ). The protein is 3-dehydroquinate synthase of Thiobacillus denitrificans (strain ATCC 25259 / T1).